The sequence spans 311 residues: Aquaporin NIP3-1 (311 aa).

The disordered stretch occupies residues 1 to 34 (MEMAAPNGGGAAGMSSPVNGASAPATPGTPAPLF). A compositionally biased stretch (low complexity) spans 20–34 (GASAPATPGTPAPLF). 2 helical membrane-spanning segments follow: residues 85–105 (LGAE…APIV) and 111–131 (GAIS…TIIL). An NPA 1 motif is present at residues 142 to 144 (NPS). The next 3 membrane-spanning stretches (helical) occupy residues 158–178 (LQVP…GFAL), 202–222 (AFFT…AVAT), and 226–246 (AVGE…ILIA). Positions 255–257 (NPV) match the NPA 2 motif. A helical membrane pass occupies residues 273–293 (WIYLIAPTLGAVAGAGVYTAV).

Belongs to the MIP/aquaporin (TC 1.A.8) family. NIP (TC 1.A.8.12) subfamily. Expressed in roots and leaves.

The protein resides in the membrane. Aquaporins facilitate the transport of water and small neutral solutes across cell membranes. The sequence is that of Aquaporin NIP3-1 (NIP3-1) from Oryza sativa subsp. japonica (Rice).